The following is a 181-amino-acid chain: Inner membrane-spanning protein YciB (181 aa).

Transmembrane regions (helical) follow at residues 10–30, 50–70, 72–92, 118–138, and 148–168; these read LIIF…GALI, MHLI…VFHD, AFIK…LGVS, VTWY…YVAF, and FKVF…VFYL.

It belongs to the YciB family.

The protein localises to the cell inner membrane. Its function is as follows. Plays a role in cell envelope biogenesis, maintenance of cell envelope integrity and membrane homeostasis. The protein is Inner membrane-spanning protein YciB of Shewanella sp. (strain ANA-3).